Here is a 369-residue protein sequence, read N- to C-terminus: S-(hydroxymethyl)glutathione dehydrogenase (369 aa).

Positions 40, 62, 92, 95, 98, 106, and 169 each coordinate Zn(2+).

The protein belongs to the zinc-containing alcohol dehydrogenase family. Class-III subfamily. As to quaternary structure, homodimer. Zn(2+) is required as a cofactor.

The protein resides in the cytoplasm. The enzyme catalyses S-(hydroxymethyl)glutathione + NADP(+) = S-formylglutathione + NADPH + H(+). The catalysed reaction is S-(hydroxymethyl)glutathione + NAD(+) = S-formylglutathione + NADH + H(+). It carries out the reaction a primary alcohol + NAD(+) = an aldehyde + NADH + H(+). It catalyses the reaction a secondary alcohol + NAD(+) = a ketone + NADH + H(+). The enzyme catalyses S-nitrosoglutathione + NADH + H(+) = S-(hydroxysulfenamide)glutathione + NAD(+). Has high formaldehyde dehydrogenase activity in the presence of glutathione and catalyzes the oxidation of normal alcohols in a reaction that is not GSH-dependent. In addition, hemithiolacetals other than those formed from GSH, including omega-thiol fatty acids, also are substrates. Also acts as a S-nitroso-glutathione reductase by catalyzing the NADH-dependent reduction of S-nitrosoglutathione. The polypeptide is S-(hydroxymethyl)glutathione dehydrogenase (frmA) (Escherichia coli O6:H1 (strain CFT073 / ATCC 700928 / UPEC)).